Consider the following 247-residue polypeptide: Segregation and condensation protein A (247 aa).

It belongs to the ScpA family. In terms of assembly, component of a cohesin-like complex composed of ScpA, ScpB and the Smc homodimer, in which ScpA and ScpB bind to the head domain of Smc. The presence of the three proteins is required for the association of the complex with DNA.

The protein resides in the cytoplasm. In terms of biological role, participates in chromosomal partition during cell division. May act via the formation of a condensin-like complex containing Smc and ScpB that pull DNA away from mid-cell into both cell halves. This Lactobacillus johnsonii (strain CNCM I-12250 / La1 / NCC 533) protein is Segregation and condensation protein A.